The sequence spans 331 residues: Polyprenyl transferase mpaA' (331 aa).

Transmembrane regions (helical) follow at residues 27–47 (MPYY…ALKL), 56–76 (IEFI…LCGA), 127–147 (LILD…SIML), 159–179 (VFVY…ITGW), 190–210 (GDII…CVYF), 240–260 (LFLA…ISTI), 264–284 (WLWV…IAQF), and 295–315 (IHWD…VEVG).

It belongs to the UbiA prenyltransferase family. Mg(2+) is required as a cofactor.

It is found in the golgi apparatus membrane. The enzyme catalyses 5,7-dihydroxy-4-methylphthalide + (2E,6E)-farnesyl diphosphate = 4-farnesyl-3,5-dihydroxy-6-methylphthalide + diphosphate. It participates in secondary metabolite biosynthesis; terpenoid biosynthesis. Polyprenyl transferase; part of the gene cluster that mediates the biosynthesis of mycophenolic acid (MPA), the first isolated antibiotic natural product in the world obtained from a culture of Penicillium brevicompactum in 1893. MpaA' is a Golgi apparatus-associated enzyme that catalyzes the prenylation of 5,7-dihydroxy-4,6-dimethylphthalide (DHMP) to yield farnesyl-DHMP (FDHMP). The first step of the pathway is the synthesis of 5-methylorsellinic acid (5MOA) by the cytosolic polyketide synthase mpaC. 5MOA is then converted to the phthalide compound 5,7-dihydroxy-4,6-dimethylphthalide (DHMP) by the endoplasmic reticulum-bound cytochrome P450 monooxygenase mpaDE. MpaDE first catalyzes hydroxylation of 5-MOA to 4,6-dihydroxy-2-(hydroxymethyl)-3-methylbenzoic acid (DHMB). MpaDE then acts as a lactone synthase that catalyzes the ring closure to convert DHMB into DHMP. The next step is the prenylation of DHMP by the Golgi apparatus-associated prenyltransferase mpaA to yield farnesyl-DHMP (FDHMP). The ER-bound oxygenase mpaB then mediates the oxidative cleavage the C19-C20 double bond in FDHMP to yield FDHMP-3C via a mycophenolic aldehyde intermediate. The O-methyltransferase mpaG catalyzes the methylation of FDHMP-3C to yield MFDHMP-3C. After the cytosolic methylation of FDHMP-3C, MFDHMP-3C enters into peroxisomes probably via free diffusion due to its low molecular weight. Upon a peroxisomal CoA ligation reaction, catalyzed by a beta-oxidation component enzyme acyl-CoA ligase ACL891, MFDHMP-3C-CoA would then be restricted to peroxisomes for the following beta-oxidation pathway steps. The peroxisomal beta-oxidation machinery than converts MFDHMP-3C-CoA into MPA_CoA, via a beta-oxidation chain-shortening process. Finally mpaH acts as a peroxisomal acyl-CoA hydrolase with high substrate specificity toward MPA-CoA to release the final product MPA. The chain is Polyprenyl transferase mpaA' from Penicillium brevicompactum.